The sequence spans 266 residues: Receptor-recognizing protein gp38 (266 aa).

10 short sequence motifs (GRM) span residues 116 to 123 (GRGGNGGY), 126 to 137 (SGGDGNGTQGGH), 157 to 171 (AGGG…RPHS), 174 to 184 (KWQDIGGGGGR), 187 to 191 (GGAGG), 194 to 200 (YSGGAAS), 202 to 209 (EGPGGGYD), 214 to 220 (HSGAGGN), 223 to 228 (AAGQNA), and 232 to 246 (GGKV…ASGH).

This sequence belongs to the receptor-recognizing protein gp38 family.

It is found in the virion. Its function is as follows. Receptor binding protein (RBP) that is at the tip of the long tail fibers and serves as the phage recognition site for the attachment host receptor. Probably uses the host receptor OmpA. The chain is Receptor-recognizing protein gp38 (38) from Enterobacteria phage Ox2 (Bacteriophage Ox2).